Here is a 150-residue protein sequence, read N- to C-terminus: Suppressor of HU sensitivity involved in recombination protein 1 (150 aa).

Component of the SHU complex composed of at least CSM2, PSY3, SHU1 and SHU2.

The protein resides in the nucleus. Its function is as follows. Plays a role in a RAD51/RAD54-dependent homologous recombination repair (HRR) pathway to repair MMS-induced lesions during S-phase. In Saccharomyces cerevisiae (strain ATCC 204508 / S288c) (Baker's yeast), this protein is Suppressor of HU sensitivity involved in recombination protein 1 (SHU1).